Consider the following 427-residue polypeptide: SAC3 domain-containing protein 1 (427 aa).

Composition is skewed to basic and acidic residues over residues 1-10 (MGRFKGENRS) and 117-127 (ADPKRTVKEYS). Disordered regions lie at residues 1–53 (MGRF…QDAV) and 101–143 (LHRL…LLRP). Positions 134 to 143 (PRPPPSLLRP) are enriched in pro residues. Positions 229–397 (QVQEGFGSLR…EGLPPPGAYH (169 aa)) constitute a PCI domain. S425 carries the post-translational modification Phosphoserine.

Belongs to the SAC3 family. As to quaternary structure, may be part of a SEM1-containing complex. In terms of tissue distribution, present in spleen cells (at protein level).

It is found in the cytoplasm. The protein resides in the cytoskeleton. It localises to the microtubule organizing center. The protein localises to the centrosome. Its subcellular location is the spindle. Functionally, involved in centrosome duplication and mitotic progression. The protein is SAC3 domain-containing protein 1 (Sac3d1) of Mus musculus (Mouse).